Here is a 40-residue protein sequence, read N- to C-terminus: Large ribosomal subunit protein bL36 (40 aa).

It belongs to the bacterial ribosomal protein bL36 family.

This chain is Large ribosomal subunit protein bL36, found in Corynebacterium aurimucosum (strain ATCC 700975 / DSM 44827 / CIP 107346 / CN-1) (Corynebacterium nigricans).